The following is a 74-amino-acid chain: UPF0741 protein BcerKBAB4_5177 (74 aa).

This sequence belongs to the UPF0741 family.

The protein is UPF0741 protein BcerKBAB4_5177 of Bacillus mycoides (strain KBAB4) (Bacillus weihenstephanensis).